A 156-amino-acid polypeptide reads, in one-letter code: uncharacterized protein (156 aa).

This is an uncharacterized protein from Staphylococcus aureus (strain MW2).